The chain runs to 1068 residues: Integrator complex subunit 3 homolog (1068 aa).

2 disordered regions span residues 916–939 (YPSSSPNKRKRPPKGISVSTSTPS) and 1001–1068 (VGRR…NDSD). Phosphoserine is present on residues Ser1038, Ser1039, Ser1043, and Ser1044.

This sequence belongs to the Integrator subunit 3 family. As to quaternary structure, belongs to the multiprotein complex Integrator, at least composed of IntS1, IntS2, IntS3, IntS4, omd/IntS5, IntS6, defl/IntS7, IntS8, IntS9, IntS10, IntS11, IntS12, asun/IntS13, IntS14 and IntS15. The core complex associates with protein phosphatase 2A subunits mts/PP2A and Pp2A-29B, to form the Integrator-PP2A (INTAC) complex.

The protein resides in the nucleus. The protein localises to the cytoplasm. In terms of biological role, component of the integrator complex, a multiprotein complex that terminates RNA polymerase II (Pol II) transcription in the promoter-proximal region of genes. The integrator complex provides a quality checkpoint during transcription elongation by driving premature transcription termination of transcripts that are unfavorably configured for transcriptional elongation: the complex terminates transcription by (1) catalyzing dephosphorylation of the C-terminal domain (CTD) of Pol II subunit Polr2A/Rbp1 and Spt5, and (2) degrading the exiting nascent RNA transcript via endonuclease activity. The integrator complex is also involved in the 3'-end processing of the U7 snRNA, and also the spliceosomal snRNAs U1, U2, U4 and U5. In Drosophila sechellia (Fruit fly), this protein is Integrator complex subunit 3 homolog (IntS3).